A 365-amino-acid polypeptide reads, in one-letter code: DNA replication and repair protein RecF (365 aa).

G30–T37 provides a ligand contact to ATP.

It belongs to the RecF family.

Its subcellular location is the cytoplasm. Functionally, the RecF protein is involved in DNA metabolism; it is required for DNA replication and normal SOS inducibility. RecF binds preferentially to single-stranded, linear DNA. It also seems to bind ATP. This Cellvibrio japonicus (strain Ueda107) (Pseudomonas fluorescens subsp. cellulosa) protein is DNA replication and repair protein RecF.